Here is a 126-residue protein sequence, read N- to C-terminus: Copper resistance protein C (126 aa).

Residues 1 to 23 form the signal peptide; that stretch reads MSILNKAILTGGLVMGVAFSAMA. His24 contributes to the Cu(2+) binding site. Met63, Met66, Met69, His72, and Met75 together coordinate Cu(+). His115 is a Cu(2+) binding site.

It belongs to the CopC family. Monomer-dimer equilibrium in solution for the apo protein. Dimerization is significantly enhanced upon binding of copper(I).

The protein resides in the periplasm. Its function is as follows. Copper-binding protein involved in copper resistance. This Escherichia coli protein is Copper resistance protein C.